The following is a 284-amino-acid chain: L-ribulose-5-phosphate 3-epimerase UlaE (284 aa).

This sequence belongs to the L-ribulose-5-phosphate 3-epimerase family.

It catalyses the reaction L-ribulose 5-phosphate = L-xylulose 5-phosphate. Its pathway is cofactor degradation; L-ascorbate degradation; D-xylulose 5-phosphate from L-ascorbate: step 3/4. Functionally, catalyzes the isomerization of L-xylulose-5-phosphate to L-ribulose-5-phosphate. Is involved in the anaerobic L-ascorbate utilization. The polypeptide is L-ribulose-5-phosphate 3-epimerase UlaE (Escherichia coli O127:H6 (strain E2348/69 / EPEC)).